We begin with the raw amino-acid sequence, 382 residues long: SAT4 family membrane protein (382 aa).

The disordered stretch occupies residues 1 to 22 (MFGAELVGRETGGQSTDQPYSY). Asn78 is a glycosylation site (N-linked (GlcNAc...) asparagine). The next 2 helical transmembrane spans lie at 80–100 (SQILYAPLIFVTKLSIFLLYL) and 112–132 (YLSIHLLIWFNLAFYLANFFL). N-linked (GlcNAc...) asparagine glycosylation is present at Asn147. The next 3 helical transmembrane spans lie at 159 to 179 (ILVTAAINVVSDLLMLCLPII), 192 to 212 (LGISAIFAAGIFGCFASIMRL), and 228 to 248 (WYTEITCGILASCLPALPTFF). An N-linked (GlcNAc...) asparagine glycan is attached at Asn269.

It belongs to the SAT4 family.

It is found in the membrane. The chain is SAT4 family membrane protein from Emericella nidulans (strain FGSC A4 / ATCC 38163 / CBS 112.46 / NRRL 194 / M139) (Aspergillus nidulans).